Reading from the N-terminus, the 776-residue chain is Probable inorganic carbon transporter subunit DabA (776 aa).

Residues Cys313, Asp315, His473, and Cys488 each contribute to the Zn(2+) site.

Belongs to the inorganic carbon transporter (TC 9.A.2) DabA family. Forms a complex with DabB. Requires Zn(2+) as cofactor.

The protein localises to the cell inner membrane. Part of an energy-coupled inorganic carbon pump. In Chromobacterium violaceum (strain ATCC 12472 / DSM 30191 / JCM 1249 / CCUG 213 / NBRC 12614 / NCIMB 9131 / NCTC 9757 / MK), this protein is Probable inorganic carbon transporter subunit DabA.